The chain runs to 353 residues: Uroporphyrinogen decarboxylase (353 aa).

Substrate is bound by residues 30-34 (RQAGR), Asp-79, Tyr-154, Ser-209, and His-332.

This sequence belongs to the uroporphyrinogen decarboxylase family. As to quaternary structure, homodimer.

The protein resides in the cytoplasm. It carries out the reaction uroporphyrinogen III + 4 H(+) = coproporphyrinogen III + 4 CO2. The protein operates within porphyrin-containing compound metabolism; protoporphyrin-IX biosynthesis; coproporphyrinogen-III from 5-aminolevulinate: step 4/4. Functionally, catalyzes the decarboxylation of four acetate groups of uroporphyrinogen-III to yield coproporphyrinogen-III. This chain is Uroporphyrinogen decarboxylase, found in Mycobacterium marinum (strain ATCC BAA-535 / M).